Reading from the N-terminus, the 2080-residue chain is Fatty acid synthase beta subunit TOXC (2080 aa).

Residues G170–K397 enclose the Starter acyltransferase (SAT) domain. Residue S276 is the For acetyltransferase activity of the active site. The segment at S585 to D830 is enoyl reductase (ER) domain. Residues G1155–L1644 form a dehydratase (DH) domain region. Residues S1544–A1662 form the MaoC-like domain. The 365-residue stretch at T1682–S2046 folds into the Malonyl-CoA:ACP transacylase (MAT) domain. The malonyl/palmitoyl transferase (MT/PT) domain stretch occupies residues Y1683–S2046. Catalysis depends on S1828, which acts as the For malonyltransferase activity.

The protein belongs to the fungal fatty acid synthetase subunit beta family.

It carries out the reaction acetyl-CoA + n malonyl-CoA + 2n NADPH + 4n H(+) = a long-chain-acyl-CoA + n CoA + n CO2 + 2n NADP(+).. The catalysed reaction is holo-[ACP] + acetyl-CoA = acetyl-[ACP] + CoA. It catalyses the reaction holo-[ACP] + malonyl-CoA = malonyl-[ACP] + CoA. The enzyme catalyses a (3R)-hydroxyacyl-[ACP] = a (2E)-enoyl-[ACP] + H2O. It carries out the reaction a 2,3-saturated acyl-[ACP] + NAD(+) = a (2E)-enoyl-[ACP] + NADH + H(+). The catalysed reaction is (9Z)-octadecenoyl-[ACP] + H2O = (9Z)-octadecenoate + holo-[ACP] + H(+). The protein operates within mycotoxin biosynthesis; HC-toxin biosynthesis. Fatty acid synthase beta subunit, part of the diffuse TOX2 gene cluster that mediates the biosynthesis of the HC-toxin, cyclic tetrapeptide of structure cyclo(D-Pro-L-Ala-D-Ala-L-Aeo), where Aeo stands for 2-amino-9,10-epoxi-8-oxodecanoic acid. HC-toxin is a determinant of specificity and virulence in the interaction between the producing fungus and its host, maize. TOXC contribute to the synthesis of the decanoic backbone of 2-amino-9,10-epoxi-8-oxodecanoic acid, an essential precursor for the production of the major forms of HC-toxin by the non-ribosomal peptide synthetase HTS1. In Cochliobolus carbonum (Maize leaf spot fungus), this protein is Fatty acid synthase beta subunit TOXC.